A 231-amino-acid polypeptide reads, in one-letter code: Putative N-acetylmannosamine-6-phosphate 2-epimerase (231 aa).

It belongs to the NanE family.

It catalyses the reaction an N-acyl-D-glucosamine 6-phosphate = an N-acyl-D-mannosamine 6-phosphate. The protein operates within amino-sugar metabolism; N-acetylneuraminate degradation; D-fructose 6-phosphate from N-acetylneuraminate: step 3/5. In terms of biological role, converts N-acetylmannosamine-6-phosphate (ManNAc-6-P) to N-acetylglucosamine-6-phosphate (GlcNAc-6-P). In Listeria innocua serovar 6a (strain ATCC BAA-680 / CLIP 11262), this protein is Putative N-acetylmannosamine-6-phosphate 2-epimerase.